Here is a 61-residue protein sequence, read N- to C-terminus: Small ribosomal subunit protein uS14 (61 aa).

Positions 24, 27, 40, and 43 each coordinate Zn(2+).

It belongs to the universal ribosomal protein uS14 family. Zinc-binding uS14 subfamily. Part of the 30S ribosomal subunit. Contacts proteins S3 and S10. Zn(2+) is required as a cofactor.

Binds 16S rRNA, required for the assembly of 30S particles and may also be responsible for determining the conformation of the 16S rRNA at the A site. This is Small ribosomal subunit protein uS14 from Thermus thermophilus (strain ATCC BAA-163 / DSM 7039 / HB27).